Reading from the N-terminus, the 228-residue chain is Uridylate kinase (228 aa).

An ATP-binding site is contributed by 9 to 10 (GS). Glycine 44 is a UMP binding site. ATP contacts are provided by glycine 45 and arginine 49. UMP is bound by residues aspartate 66 and 114–120 (IVAAQTT). ATP contacts are provided by threonine 140, tyrosine 146, and aspartate 149.

It belongs to the UMP kinase family. In terms of assembly, homohexamer.

It is found in the cytoplasm. The enzyme catalyses UMP + ATP = UDP + ADP. It functions in the pathway pyrimidine metabolism; CTP biosynthesis via de novo pathway; UDP from UMP (UMPK route): step 1/1. Inhibited by UTP. Catalyzes the reversible phosphorylation of UMP to UDP. This chain is Uridylate kinase, found in Haloarcula marismortui (strain ATCC 43049 / DSM 3752 / JCM 8966 / VKM B-1809) (Halobacterium marismortui).